The primary structure comprises 349 residues: Flavonol synthase/flavanone 3-hydroxylase (349 aa).

The 98-residue stretch at 213–310 folds into the Fe2OG dioxygenase domain; sequence DIVYMLKINY…RMSWPVFLEP (98 aa). The Fe cation site is built by His238, Asp240, and His291.

The protein belongs to the iron/ascorbate-dependent oxidoreductase family. Fe cation is required as a cofactor. L-ascorbate serves as cofactor.

The protein resides in the cytoplasm. The enzyme catalyses a (2R,3R)-dihydroflavonol + 2-oxoglutarate + O2 = a flavonol + succinate + CO2 + H2O. It catalyses the reaction a (2S)-flavan-4-one + 2-oxoglutarate + O2 = a (2R,3R)-dihydroflavonol + succinate + CO2. It participates in secondary metabolite biosynthesis; flavonoid biosynthesis. Catalyzes the formation of flavonols from dihydroflavonols. It can act on dihydrokaempferol to produce kaempferol, on dihydroquercetin to produce quercitin and on dihydromyricetin to produce myricetin. The chain is Flavonol synthase/flavanone 3-hydroxylase from Solanum tuberosum (Potato).